The following is an 867-amino-acid chain: Alanine--tRNA ligase (867 aa).

Residues His558, His562, Cys660, and His664 each contribute to the Zn(2+) site.

The protein belongs to the class-II aminoacyl-tRNA synthetase family. The cofactor is Zn(2+).

Its subcellular location is the cytoplasm. It catalyses the reaction tRNA(Ala) + L-alanine + ATP = L-alanyl-tRNA(Ala) + AMP + diphosphate. Functionally, catalyzes the attachment of alanine to tRNA(Ala) in a two-step reaction: alanine is first activated by ATP to form Ala-AMP and then transferred to the acceptor end of tRNA(Ala). Also edits incorrectly charged Ser-tRNA(Ala) and Gly-tRNA(Ala) via its editing domain. In Fervidobacterium nodosum (strain ATCC 35602 / DSM 5306 / Rt17-B1), this protein is Alanine--tRNA ligase.